A 231-amino-acid polypeptide reads, in one-letter code: Orotidine 5'-phosphate decarboxylase (231 aa).

Substrate is bound by residues Asp-11, Lys-32, 59 to 68 (DLKFHDIPNT), Thr-118, Arg-180, Gln-189, Gly-209, and Arg-210. The active-site Proton donor is Lys-61.

The protein belongs to the OMP decarboxylase family. Type 1 subfamily. Homodimer.

The catalysed reaction is orotidine 5'-phosphate + H(+) = UMP + CO2. Its pathway is pyrimidine metabolism; UMP biosynthesis via de novo pathway; UMP from orotate: step 2/2. In terms of biological role, catalyzes the decarboxylation of orotidine 5'-monophosphate (OMP) to uridine 5'-monophosphate (UMP). The chain is Orotidine 5'-phosphate decarboxylase from Synechocystis sp. (strain ATCC 27184 / PCC 6803 / Kazusa).